We begin with the raw amino-acid sequence, 362 residues long: Probable cinnamyl alcohol dehydrogenase 9 (362 aa).

Cys-45 is a Zn(2+) binding site. Residue Ser-47 coordinates NADP(+). 7 residues coordinate Zn(2+): His-67, Glu-68, Cys-98, Cys-101, Cys-104, Cys-112, and Cys-167. NADP(+)-binding positions include Thr-171, Gly-192–Gly-197, Ser-215–Lys-220, Thr-255, Gly-279, and Ser-302–Ile-304.

The protein belongs to the zinc-containing alcohol dehydrogenase family. In terms of assembly, homodimer. Zn(2+) serves as cofactor.

It catalyses the reaction (E)-cinnamyl alcohol + NADP(+) = (E)-cinnamaldehyde + NADPH + H(+). The enzyme catalyses (E)-coniferol + NADP(+) = (E)-coniferaldehyde + NADPH + H(+). The catalysed reaction is (E)-sinapyl alcohol + NADP(+) = (E)-sinapaldehyde + NADPH + H(+). It carries out the reaction (E)-4-coumaroyl alcohol + NADP(+) = (E)-4-coumaraldehyde + NADPH + H(+). It catalyses the reaction (E)-caffeyl alcohol + NADP(+) = (E)-caffeyl aldehyde + NADPH + H(+). The protein operates within aromatic compound metabolism; phenylpropanoid biosynthesis. Functionally, involved in lignin biosynthesis. Catalyzes the final step specific for the production of lignin monomers. Catalyzes the NADPH-dependent reduction of coniferaldehyde, 5-hydroxyconiferaldehyde, sinapaldehyde, 4-coumaraldehyde and caffeyl aldehyde to their respective alcohols. In Oryza sativa subsp. japonica (Rice), this protein is Probable cinnamyl alcohol dehydrogenase 9.